Here is a 212-residue protein sequence, read N- to C-terminus: Thymidylate kinase (212 aa).

ATP is bound at residue 11–18 (GPDGAGKT).

It belongs to the thymidylate kinase family.

It carries out the reaction dTMP + ATP = dTDP + ADP. Functionally, phosphorylation of dTMP to form dTDP in both de novo and salvage pathways of dTTP synthesis. This Streptococcus mutans serotype c (strain ATCC 700610 / UA159) protein is Thymidylate kinase.